Reading from the N-terminus, the 640-residue chain is tRNA uridine 5-carboxymethylaminomethyl modification enzyme MnmG (640 aa).

9–14 provides a ligand contact to FAD; sequence GGGHAG. 289-303 contributes to the NAD(+) binding site; it reads GPRYCPSIEDKINKF.

It belongs to the MnmG family. In terms of assembly, homodimer. Heterotetramer of two MnmE and two MnmG subunits. FAD serves as cofactor.

Its subcellular location is the cytoplasm. NAD-binding protein involved in the addition of a carboxymethylaminomethyl (cmnm) group at the wobble position (U34) of certain tRNAs, forming tRNA-cmnm(5)s(2)U34. The sequence is that of tRNA uridine 5-carboxymethylaminomethyl modification enzyme MnmG from Campylobacter hominis (strain ATCC BAA-381 / DSM 21671 / CCUG 45161 / LMG 19568 / NCTC 13146 / CH001A).